A 428-amino-acid chain; its full sequence is C4-dicarboxylate transport protein (428 aa).

The next 9 helical transmembrane spans lie at 8-28 (SLYV…HFYP), 44-64 (LIKM…IAGM), 76-96 (VALL…LIIV), 142-162 (IGAF…LFGF), 184-204 (VIFG…FGAM), 222-242 (LIIC…GSIA), 289-309 (VVGL…SIYL), 326-346 (IFHQ…AAGV), and 352-372 (IVLA…LALI).

Belongs to the dicarboxylate/amino acid:cation symporter (DAACS) (TC 2.A.23) family.

The protein localises to the cell inner membrane. In terms of biological role, responsible for the transport of dicarboxylates such as succinate, fumarate, and malate from the periplasm across the membrane. The protein is C4-dicarboxylate transport protein of Klebsiella pneumoniae subsp. pneumoniae (strain ATCC 700721 / MGH 78578).